A 171-amino-acid polypeptide reads, in one-letter code: Co-chaperone protein HscB (171 aa).

In terms of domain architecture, J spans 2–74; sequence DYFTLFGLPA…LTRAEYLLSL (73 aa).

Belongs to the HscB family. As to quaternary structure, interacts with HscA and stimulates its ATPase activity. Interacts with IscU.

Functionally, co-chaperone involved in the maturation of iron-sulfur cluster-containing proteins. Seems to help targeting proteins to be folded toward HscA. In Klebsiella pneumoniae (strain 342), this protein is Co-chaperone protein HscB.